A 349-amino-acid polypeptide reads, in one-letter code: Probable transporter vicT (349 aa).

In terms of domain architecture, EamA spans 25–153 (IAAALLHALA…TALAGVVLVL (129 aa)). 9 helical membrane-spanning segments follow: residues 49–69 (PFTVLQIRLFITVLGCTAYLW), 89–109 (AAGGVFGACGFYLSISYLSLS), 111–131 (ATVLNFIAPLGAIMLTTYWEG), 133–153 (TFAFLDLIACITALAGVVLVL), 179–199 (LKGVVSGITGVAGGIVAFSAM), 215–235 (FGVSICIVTTAFSTIMPEVVW), 244–264 (LLAIIGILGLVMEYLLTAGLG), 269–289 (RVTIMIYSQVLWALFLDWAIW), and 294–314 (NVLTVLGSMVVVASLAVPYLF).

The protein belongs to the TPT transporter family. SLC35D subfamily.

The protein localises to the membrane. Functionally, probable transporter; part of the gene cluster that mediates the biosynthesis of the secondary metabolite victorin, the molecular basis for Victoria blight of oats. The polypeptide is Probable transporter vicT (Bipolaris victoriae (strain FI3) (Victoria blight of oats agent)).